A 622-amino-acid polypeptide reads, in one-letter code: Auxin efflux carrier component 1 (622 aa).

At 1 to 6 (MITAAD) the chain is on the extracellular side. Residues 7–27 (FYHVMTAMVPLYVAMILAYGS) traverse the membrane as a helical segment. Over 28 to 44 (VKWWKIFTPDQCSGINR) the chain is Cytoplasmic. A helical transmembrane segment spans residues 45–65 (FVALFAVPLLSFHFIAANNPY). Val51 contributes to the (indol-3-yl)acetate binding site. Residues 66-70 (AMNLR) lie on the Extracellular side of the membrane. The chain crosses the membrane as a helical span at residues 71-91 (FLAADSLQKVIVLSLLFLWCK). Topologically, residues 92–100 (LSRNGSLDW) are cytoplasmic. The helical transmembrane segment at 101–121 (TITLFSLSTLPNTLVMGIPLL) threads the bilayer. (indol-3-yl)acetate contacts are provided by Asn112 and Leu114. Residues 122 to 131 (KGMYGNFSGD) are Extracellular-facing. The N-linked (GlcNAc...) asparagine glycan is linked to Asn127. Residues 132 to 152 (LMVQIVVLQCIIWYTLMLFLF) form a helical membrane-spanning segment. Tyr145 serves as a coordination point for (indol-3-yl)acetate. At 153-482 (EYRGAKLLIS…LIRNPNSYSS (330 aa)) the chain is on the cytoplasmic side. Phosphoserine is present on residues Ser209, Ser212, Ser221, and Ser225. A disordered region spans residues 213 to 233 (RSDIYSRRSQGLSATPRPSNL). Position 227 is a phosphothreonine (Thr227). Residue Ser231 is modified to Phosphoserine. Thr248 carries the phosphothreonine modification. Residues Ser252, Ser253, and Ser271 each carry the phosphoserine modification. A disordered region spans residues 268-362 (GRNSNFGPGE…PVVGGKRQDG (95 aa)). Thr286 is subject to Phosphothreonine. Position 290 is a phosphoserine (Ser290). Over residues 298–311 (PAKPTAAGTAAGAG) the composition is skewed to low complexity. Thr302 carries the phosphothreonine modification. Phosphoserine is present on residues Ser317, Ser320, and Ser337. Phosphothreonine is present on Thr340. A phosphoserine mark is found at Ser374, Ser377, Ser408, Ser414, Ser426, Ser434, and Ser446. The chain crosses the membrane as a helical span at residues 483-503 (LFGITWSLISFKWNIEMPALI). At 504–506 (AKS) the chain is on the extracellular side. The helical transmembrane segment at 507–527 (ISILSDAGLGMAMFSLGLFMA) threads the bilayer. Residues 528–541 (LNPRIIACGNRRAA) are Cytoplasmic-facing. Residues 542–562 (FAAAMRFVVGPAVMLVASYAV) traverse the membrane as a helical segment. Over 563-566 (GLRG) the chain is Extracellular. Residues 567-587 (VLLHVAIIQAALPQGIVPFVF) traverse the membrane as a helical segment. The (indol-3-yl)acetate site is built by Ile582 and Val583. At 588–601 (AKEYNVHPDILSTA) the chain is on the cytoplasmic side. Residues 602–622 (VIFGMLIALPITLLYYILLGL) traverse the membrane as a helical segment.

It belongs to the auxin efflux carrier (TC 2.A.69.1) family. As to quaternary structure, homodimer. Interacts with TOPP4. Interacts with FYPP1 and FYPP3. Component of a complex made of PINs (e.g. PIN1 and PIN2), MAB4/MELs (e.g. NPY1/MAB4 and NPY5/MEL1) and AGC kinases (e.g. D6PK and PID) at the plasma membrane. Binds directly to NPY5/MEL1. In terms of tissue distribution, expressed at the basal side of elongated parenchymatous xylem cells.

It localises to the cell membrane. Auxin efflux carrier activity is competitively inhibited by naptalamate (N-1-naphthylphthalamic acid, NPA) but activated by D6PK-mediated phosphorylation. Acts as a component of the auxin efflux carrier; this activity is enhanced when activated by D6PK-mediated phosphorylation. Binds auxins including indole-3-acetic acid (IAA), indole-3-butyric acid (IBA), indole-3-propionic acid (IPA) and 4-chloroindole-3-acetic acid (4-Cl-IAA). Seems to be involved in the basipetal auxin transport. Mediates the formation of auxin gradient which is required to ensure correct organogenesis. Coordinated polar localization of PIN1 is directly regulated by the vesicle trafficking process and apical-basal PIN1 polarity also depends on the phosphorylation of conserved serine residues by PID kinase. The ARF-GEF protein GNOM is required for the correct recycling of PIN1 between the plasma membrane and endosomal compartments. Recrutes NPY proteins (e.g. NPY1/MAB4 and NPY5/MEL1) to the plasma membrane in a polar basal localization in root epidermis; this activity is optimized by AGC kinases-mediated (e.g. D6PK and PID) phosphorylation that limits their lateral diffusion-based escape. The chain is Auxin efflux carrier component 1 from Arabidopsis thaliana (Mouse-ear cress).